Here is an 850-residue protein sequence, read N- to C-terminus: Tripartite terminase subunit 1 (850 aa).

The C3H1-type zinc finger occupies 191 to 219 (CAQCYEELTIIPNQGRSLNKRLQGLLCNH). A disordered region spans residues 438 to 489 (GTTLMTASNSSNSSTHSQRNNGGGGRARGGGKKVVGGGVNGQDGDGSENGLR). Positions 439–457 (TTLMTASNSSNSSTHSQRN) are enriched in low complexity. The segment covering 458–481 (NGGGGRARGGGKKVVGGGVNGQDG) has biased composition (gly residues). 709-716 (YNETFGKQ) provides a ligand contact to ATP. The segment at 801-831 (WLPSPYPSSSTAGVSRRVRATRKRPRRASSL) is disordered. Residues 816–827 (RRVRATRKRPRR) are compositionally biased toward basic residues. The Nuclear localization signal motif lies at 822 to 827 (RKRPRR).

Belongs to the herpesviridae TRM1 protein family. In terms of assembly, associates with TRM2 and TRM3 to form the tripartite terminase complex. Interacts with portal protein.

The protein localises to the host nucleus. Component of the molecular motor that translocates viral genomic DNA in empty capsid during DNA packaging. Forms a tripartite terminase complex together with TRM2 and TRM3 in the host cytoplasm. Once the complex reaches the host nucleus, it interacts with the capsid portal vertex. This portal forms a ring in which genomic DNA is translocated into the capsid. TRM1 carries an endonuclease activity that plays an important role for the cleavage of concatemeric viral DNA into unit length genomes. The polypeptide is Tripartite terminase subunit 1 (Homo sapiens (Human)).